The primary structure comprises 179 residues: Large ribosomal subunit protein uL5 (179 aa).

It belongs to the universal ribosomal protein uL5 family. Part of the 50S ribosomal subunit; part of the 5S rRNA/L5/L18/L25 subcomplex. Contacts the 5S rRNA and the P site tRNA. Forms a bridge to the 30S subunit in the 70S ribosome.

This is one of the proteins that bind and probably mediate the attachment of the 5S RNA into the large ribosomal subunit, where it forms part of the central protuberance. In the 70S ribosome it contacts protein S13 of the 30S subunit (bridge B1b), connecting the 2 subunits; this bridge is implicated in subunit movement. Contacts the P site tRNA; the 5S rRNA and some of its associated proteins might help stabilize positioning of ribosome-bound tRNAs. This is Large ribosomal subunit protein uL5 from Ectopseudomonas mendocina (strain ymp) (Pseudomonas mendocina).